The chain runs to 396 residues: MMNGIKSSPCNMPYLPDDLLLNILGRVSRLYYPILSLVSKRFRSLVGSLELYKIRTLLGRRTENCLYLSLRFSYGSNPRWFTLCRRPTRTPSPEPNLKSRWFTSCFRPILTNLTRATSKEEKKLSENLMVSIPTSNDCPLSGLTCNTIGSYIYMIGGYINGVLSSRVFFLDCRSHTWHEAPSMQVARKSPLVNVLDGKIYVVEGWRGSDYSNLIEIFDPKTQKWEHVPSPSAEMRGRYISKGLVYEEKLYLFGDKNVVYKPKESRWDALGFDMNLWLVSYGSSCVIDNVCYMVFYKRLIWYDSEVRYWRVLKGLEKLPKLRHRRSCIRMVDYGGKIAILWEKKVRVVGSDKKMIWCTEIALERRSAHKIYGKIEWCDVVLTVPKSCSLLEFIAVTI.

The F-box domain occupies 9-55 (PCNMPYLPDDLLLNILGRVSRLYYPILSLVSKRFRSLVGSLELYKIR). Kelch repeat units lie at residues 151–197 (YIYM…VLDG), 198–248 (KIYV…YEEK), and 250–296 (YLFG…VFYK).

The protein is Putative F-box/kelch-repeat protein At4g11770 of Arabidopsis thaliana (Mouse-ear cress).